A 253-amino-acid chain; its full sequence is Cell division protein ZapD (253 aa).

This sequence belongs to the ZapD family. Interacts with FtsZ.

Its subcellular location is the cytoplasm. Cell division factor that enhances FtsZ-ring assembly. Directly interacts with FtsZ and promotes bundling of FtsZ protofilaments, with a reduction in FtsZ GTPase activity. The sequence is that of Cell division protein ZapD from Bordetella bronchiseptica (strain ATCC BAA-588 / NCTC 13252 / RB50) (Alcaligenes bronchisepticus).